The primary structure comprises 331 residues: Coiled-coil domain-containing protein 92 (331 aa).

2 coiled-coil regions span residues 18–44 (MAAT…HAST) and 76–152 (DGTS…EQRA). The segment covering 171–184 (SSSGTSDASPSGSP) has biased composition (low complexity). Positions 171-212 (SSSGTSDASPSGSPVLASYKPAPPKDKLPETPRRRMKKSLSA) are disordered. Positions 193–203 (PPKDKLPETPR) are enriched in basic and acidic residues. Ser-209 is subject to Phosphoserine.

In terms of assembly, interacts with CEP164. As to quaternary structure, (Microbial infection) Interacts with ebolavirus protein NP; this interaction sequesters NP in the cytoplasm. Post-translationally, phosphorylated at Ser-209 by TTBK2.

The protein localises to the cytoplasm. The protein resides in the cytoskeleton. It localises to the microtubule organizing center. It is found in the centrosome. Its subcellular location is the centriole. Its function is as follows. Interferon-stimulated protein that plays a role in innate immunity. Strongly inhibits ebolavirus transcription and replication. Forms a complex with viral RNA-bound nucleocapsid NP and thereby prevents the transport of NP to the cell surface. The sequence is that of Coiled-coil domain-containing protein 92 (CCDC92) from Homo sapiens (Human).